The sequence spans 422 residues: Keratin, type II cytoskeletal 80 (422 aa).

The head stretch occupies residues 1–82; sequence MACRSCVVGF…DPAIQQQKNN (82 aa). At Ser45 the chain carries Phosphoserine. Residues 83–118 are coil 1A; the sequence is EKEEMKVLNDKFASLIGKVQALEQRNQLLETRWHFL. One can recognise an IF rod domain in the interval 83 to 394; it reads EKEEMKVLND…KLMEGEESRM (312 aa). The linker 1 stretch occupies residues 119-135; sequence QSQDSATFDLGHLYEEY. Residues 136–227 form a coil 1B region; sequence QGRLQEELRK…SIYEQELKDL (92 aa). Residues 228–251 form a linker 12 region; it reads AAQLKDVSVTVGMDSRCHIDLSGI. A coil 2 region spans residues 252–390; that stretch reads VEEVKAQYDA…ATYRKLMEGE (139 aa). A tail region spans residues 391 to 422; that stretch reads ESRMDMPSATVVSAVQARCRTAPTLPHPLCSL.

It belongs to the intermediate filament family. As to quaternary structure, heterotetramer of two type I and two type II keratins.

This chain is Keratin, type II cytoskeletal 80 (KRT80), found in Bos taurus (Bovine).